Reading from the N-terminus, the 252-residue chain is Enolase-phosphatase E1 (252 aa).

Residues D14 and E16 each coordinate Mg(2+). Substrate is bound by residues 143-144 (SS) and K177. Mg(2+) is bound at residue D202.

This sequence belongs to the HAD-like hydrolase superfamily. MasA/MtnC family. In terms of assembly, monomer. The cofactor is Mg(2+).

The protein localises to the cytoplasm. The protein resides in the nucleus. It catalyses the reaction 5-methylsulfanyl-2,3-dioxopentyl phosphate + H2O = 1,2-dihydroxy-5-(methylsulfanyl)pent-1-en-3-one + phosphate. Its pathway is amino-acid biosynthesis; L-methionine biosynthesis via salvage pathway; L-methionine from S-methyl-5-thio-alpha-D-ribose 1-phosphate: step 3/6. The protein operates within amino-acid biosynthesis; L-methionine biosynthesis via salvage pathway; L-methionine from S-methyl-5-thio-alpha-D-ribose 1-phosphate: step 4/6. Its function is as follows. Bifunctional enzyme that catalyzes the enolization of 2,3-diketo-5-methylthiopentyl-1-phosphate (DK-MTP-1-P) into the intermediate 2-hydroxy-3-keto-5-methylthiopentenyl-1-phosphate (HK-MTPenyl-1-P), which is then dephosphorylated to form the acireductone 1,2-dihydroxy-3-keto-5-methylthiopentene (DHK-MTPene). The sequence is that of Enolase-phosphatase E1 from Drosophila pseudoobscura pseudoobscura (Fruit fly).